A 123-amino-acid chain; its full sequence is Protein Wnt-3b (123 aa).

The O-palmitoleoyl serine; by PORCN moiety is linked to residue Ser1. A disulfide bond links Cys89 and Cys104. A glycan (N-linked (GlcNAc...) asparagine) is linked at Asn90.

Belongs to the Wnt family. Palmitoleoylation is required for efficient binding to frizzled receptors. Depalmitoleoylation leads to Wnt signaling pathway inhibition.

It is found in the secreted. It localises to the extracellular space. The protein resides in the extracellular matrix. In terms of biological role, ligand for members of the frizzled family of seven transmembrane receptors. Probable developmental protein. May be a signaling molecule which affects the development of discrete regions of tissues. Is likely to signal over only few cell diameters. The polypeptide is Protein Wnt-3b (WNT3B) (Meleagris gallopavo (Wild turkey)).